Consider the following 132-residue polypeptide: Protein LH2 (132 aa).

In Pantherophis guttatus (Corn snake), this protein is Protein LH2.